Reading from the N-terminus, the 486-residue chain is MTTVYTLVSWLAILGYWLLIAGVTLRILMKRRAVPSAMAWLLIIYILPLVGIIAYLAVGELHLGKRRAERARAMWPSTAKWLNDLKACKHIFAEENSSVAAPLFKLCERRQGIAGVKGNQLQLMTESDDVMQALIRDIQLARHNIEMVFYIWKPGGMADQVAESLMAAARRGIHCRLMLDSAGSVAFFRSPWPELMRNAGIEVVEALKVNLMRVFLRRMDLRQHRKMIMIDNYIAYTGSMNMVDPRYFKQDAGVGQWIDLMARMEGPIATAMGIIYSCDWEIETGKRILPPPPDVNIMPFEQASGHTIHTIASGPGFPEDLIHQALLTAAYSAREYLIMTTPYFVPSDDLFHAICTAAQRGVDVSIILPRKNDSMLVGWASRAFFTELLAAGVKIYQFEGGLLHTKSVLVDGELSLVGTVNLDMRSLWLNFEITLAIDDKGFGADLAAVQDDYISRSRLLDARLWLKRPLWQRVAERLFYFFSPLL.

Transmembrane regions (helical) follow at residues 3 to 23 and 38 to 58; these read TVYTLVSWLAILGYWLLIAGV and MAWLLIIYILPLVGIIAYLAV. 2 consecutive PLD phosphodiesterase domains span residues 219-246 and 399-426; these read MDLRQHRKMIMIDNYIAYTGSMNMVDPR and EGGLLHTKSVLVDGELSLVGTVNLDMRS. Active-site residues include His-224, Lys-226, Asp-231, His-404, Lys-406, and Asp-411.

Belongs to the phospholipase D family. Cardiolipin synthase subfamily. ClsA sub-subfamily.

It is found in the cell inner membrane. It carries out the reaction 2 a 1,2-diacyl-sn-glycero-3-phospho-(1'-sn-glycerol) = a cardiolipin + glycerol. Catalyzes the reversible phosphatidyl group transfer from one phosphatidylglycerol molecule to another to form cardiolipin (CL) (diphosphatidylglycerol) and glycerol. The protein is Cardiolipin synthase A of Shigella dysenteriae serotype 1 (strain Sd197).